The following is an 851-amino-acid chain: Transforming growth factor beta receptor type 3 (851 aa).

A signal peptide spans 1–20 (MTSHYVIAIFALMSSCLATA). Residues 21–787 (GPEPGALCEL…IFHGLDTLTV (767 aa)) are Extracellular-facing. C52 and C197 are oxidised to a cystine. N141 and N492 each carry an N-linked (GlcNAc...) asparagine glycan. The ZP domain occupies 455–730 (KCDNEKMIVA…PKCVPPDEAC (276 aa)). O-linked (Xyl...) (glycosaminoglycan) serine glycans are attached at residues S534 and S545. 3 N-linked (GlcNAc...) asparagine glycosylation sites follow: N571, N590, and N697. Intrachain disulfides connect C639–C705, C660–C730, and C710–C723. The tract at residues 737–751 (IIWAMMQNKKTFTKP) is interaction with TGF-beta ligand. The helical transmembrane segment at 788 to 809 (MGIAFAAFVIGALLTGALWYIY) threads the bilayer. Topologically, residues 810-851 (SHTGETAGRQQVPTSPPASENSSAAHSIGSTQSTPCSSSSTA) are cytoplasmic. The disordered stretch occupies residues 816-851 (AGRQQVPTSPPASENSSAAHSIGSTQSTPCSSSSTA). Positions 817–834 (GRQQVPTSPPASENSSAA) are enriched in polar residues. Low complexity predominate over residues 836–851 (SIGSTQSTPCSSSSTA). Position 840 is a phosphothreonine (T840).

Forms homodimers and homooligomers. Interacts with DYNLT4. Interacts with integrin ITGA5:ITGB1; this interaction promotes the internalization and trafficking of ITGA5:ITGB1 into endocytic vesicles. Interacts with TGFB1, BMP2, BMP5, BMP7 or GDF5 and inhibin A via the ligand binding domains. Interacts with ALK3/BMPR1A; this interaction results in the cell surface retention of BMPR1A. Interacts with ALK6/BMPR1B; this interaction enhances BMPR1B-mediated stimulation of the BMP signaling pathway. Interacts with the scaffolding protein beta-arrestin2/ARRB2; this interaction mediates internalization of TGFBR3 and thus regulates migration, actin cytoskeleton and activation of CDC42. As to quaternary structure, (Microbial infection) Interacts with human cytomegalovirus trimer complex composed of gH, gL, and gO; these interactions may promote HCMV cell entry in specific cell types. Post-translationally, extensively modified by glycosaminoglycan groups (GAG). Phosphorylated in the cytoplasmic domain by the type II receptor TGFBR2 at THR-840 to mediate recruitment of ARRB2 and subsequent internalization of TGFBR2 and TGFBR3.

It is found in the cell membrane. The protein localises to the secreted. It localises to the extracellular space. The protein resides in the extracellular matrix. Its function is as follows. Cell surface receptor that regulates diverse cellular processes including cell proliferation, differentiation, migration, and apoptosis. Initiates BMP, inhibin, and TGF-beta signaling pathways by interacting with different ligands including TGFB1, BMP2, BMP5, BMP7 or GDF5. Alternatively, acts as a cell surface coreceptor for BMP ligands, serving to enhance ligand binding by differentially regulating BMPR1A/ALK3 and BMPR1B/ALK6 receptor trafficking. Promotes epithelial cell adhesion, focal adhesion formation and integrin signaling during epithelial cell spreading on fibronectin. By interacting with the scaffolding protein beta-arrestin2/ARRB2, regulates migration or actin cytoskeleton and promotes the activation of CDC42 as well as the inhibition of NF-kappa-B. In gonadotrope cells, acts as an inhibin A coreceptor and regulates follicle-stimulating hormone (FSH) levels and female fertility. Plays a role in the inhibition of directed and random cell migration in epithelial cells by altering the actin cytoskeletal organization. Participates in epithelial-mesenchymal transformation (EMT) upon binding to BMP2 or TGFB2, by activating the PAR6/SMURF1/RHOA pathway. Functionally, (Microbial infection) May act as a receptor for human cytomegalovirus in different cell types by interacting with HCMV trimer composed of GO, GH and GL. The polypeptide is Transforming growth factor beta receptor type 3 (Homo sapiens (Human)).